The following is a 468-amino-acid chain: 55 kDa erythrocyte membrane protein (468 aa).

Residues 73–154 (LVQFEKVTEE…MVSIKVIPNQ (82 aa)) enclose the PDZ domain. Positions 160-230 (ALQMFMRAQF…PSPELQEWRV (71 aa)) constitute an SH3 domain. The region spanning 284–453 (RKTLVLIGAS…SLKLLEEAFE (170 aa)) is the Guanylate kinase-like domain.

The protein belongs to the MAGUK family.

It localises to the membrane. The protein resides in the cell projection. Its subcellular location is the stereocilium. May play a role in the regulation of neutrophil polarization. This chain is 55 kDa erythrocyte membrane protein (MPP1), found in Gallus gallus (Chicken).